Here is a 362-residue protein sequence, read N- to C-terminus: Ciliary neurotrophic factor receptor subunit alpha (362 aa).

An N-terminal signal peptide occupies residues 1 to 19 (MANPVPSACCVVLAAVVVV). An Ig-like C2-type domain is found at 23-103 (RHSQQDSHIQ…HLKYQTYLRV (81 aa)). C44 and C87 form a disulfide bridge. 4 N-linked (GlcNAc...) asparagine glycosylation sites follow: N58, N68, N140, and N188. 2 Fibronectin type-III domains span residues 106–203 (PPKE…VKPD) and 204–304 (PPES…TEEP). Residues 288-292 (WSDWS) carry the WSXWS motif motif. A lipid anchor (GPI-anchor amidated aspartate) is attached at D334. The propeptide at 335–362 (KGAGVGSGAVAVCWTAGLVLAAYGVLFI) is removed in mature form.

This sequence belongs to the type I cytokine receptor family. Type 3 subfamily. As to quaternary structure, heterotrimer of the alpha subunit, LIFR and IL6ST. Highly expressed in nervous system. Also found in skeletal muscle.

It localises to the cell membrane. Its function is as follows. Binds to CNTF (GPA). The alpha subunit provides the receptor specificity. The chain is Ciliary neurotrophic factor receptor subunit alpha (CNTFR) from Gallus gallus (Chicken).